The sequence spans 116 residues: uncharacterized protein (116 aa).

The protein belongs to the mimivirus L15/L51/R83 family.

This is an uncharacterized protein from Acanthamoeba polyphaga mimivirus (APMV).